The chain runs to 486 residues: Malonate-semialdehyde dehydrogenase (486 aa).

NAD(+) contacts are provided by F154, K178, E181, R182, and S231. The active-site Nucleophile is the C286. E386 is a binding site for NAD(+).

The protein belongs to the aldehyde dehydrogenase family. IolA subfamily. Homotetramer.

The enzyme catalyses 3-oxopropanoate + NAD(+) + CoA + H2O = hydrogencarbonate + acetyl-CoA + NADH + H(+). It carries out the reaction 2-methyl-3-oxopropanoate + NAD(+) + CoA + H2O = propanoyl-CoA + hydrogencarbonate + NADH + H(+). It participates in polyol metabolism; myo-inositol degradation into acetyl-CoA; acetyl-CoA from myo-inositol: step 7/7. In terms of biological role, catalyzes the oxidation of malonate semialdehyde (MSA) and methylmalonate semialdehyde (MMSA) into acetyl-CoA and propanoyl-CoA, respectively. Is involved in a myo-inositol catabolic pathway. Bicarbonate, and not CO2, is the end-product of the enzymatic reaction. The polypeptide is Malonate-semialdehyde dehydrogenase (Bacillus pumilus (strain SAFR-032)).